The primary structure comprises 116 residues: uncharacterized protein (116 aa).

Positions 64–116 (RRFYSGTVNRNARSAGAASRSTSSVKRPLESKKRNARPETEKWCASYSAGNRR) are disordered. Over residues 73-87 (RNARSAGAASRSTSS) the composition is skewed to low complexity. A compositionally biased stretch (basic and acidic residues) spans 90 to 105 (RPLESKKRNARPETEK).

This is an uncharacterized protein from Saccharomyces cerevisiae (strain ATCC 204508 / S288c) (Baker's yeast).